The sequence spans 255 residues: tRNA (guanine-N(1)-)-methyltransferase (255 aa).

S-adenosyl-L-methionine-binding positions include Gly-113 and Ile-133–Leu-138.

The protein belongs to the RNA methyltransferase TrmD family. Homodimer.

It localises to the cytoplasm. It catalyses the reaction guanosine(37) in tRNA + S-adenosyl-L-methionine = N(1)-methylguanosine(37) in tRNA + S-adenosyl-L-homocysteine + H(+). Specifically methylates guanosine-37 in various tRNAs. The sequence is that of tRNA (guanine-N(1)-)-methyltransferase from Shigella flexneri serotype 5b (strain 8401).